We begin with the raw amino-acid sequence, 779 residues long: FAD-dependent monooxygenase BOA8 (779 aa).

4 residues coordinate FAD: glutamate 85, arginine 128, aspartate 331, and alanine 344. 7 consecutive transmembrane segments (helical) span residues 471-491 (AQLA…KTPE), 504-524 (VKLD…IWTI), 542-562 (AFLL…YFFF), 587-607 (ILPL…WSSI), 618-638 (NAWY…KFIV), 665-685 (ILIC…SIAF), and 742-762 (LILT…GLIV).

Belongs to the paxM FAD-dependent monooxygenase family. FAD is required as a cofactor.

Its subcellular location is the membrane. Its pathway is polyketide biosynthesis. Its function is as follows. FAD-dependent monooxygenase; part of the gene cluster B that mediates the biosynthesis of botcinic acid and its botcinin derivatives, acetate-derived polyketides that contribute to virulence when combined with the sesquiterpene botrydial. Botcinic acid and its derivatives have been shown to induce chlorosis and necrosis during host plant infection, but also have antifungal activities. Two polyketide synthases, BOA6 and BOA9, are involved in the biosynthesis of botcinins. BOA6 mediates the formation of the per-methylated tetraketide core by condensation of four units of malonyl-CoA with one unit of acetyl-CoA, which would be methylated in activated methylene groups to yield a bicyclic acid intermediate that could then either be converted to botrylactone derivatives or lose the starter acetate unit through a retro-Claisen type C-C bond cleavage to yield botcinin derivatives. The second polyketide synthase, BOA9, is probably required for the biosynthesis of the tetraketide side chain of botcinins. The methyltransferase (MT) domain within BOA6 is probably responsible for the incorporation of four methyl groups. The trans-enoyl reductase BOA5 might take over the enoyl reductase function of BOA6 that misses an ER domain. The monooxygenases BOA2, BOA3 and BOA4 might be involved in further hydroxylations at C4, C5 and C8, whereas BOA7, close to BOA9, could potentially be involved in the hydroxylation at C4 in the side chain of botcinins. This is FAD-dependent monooxygenase BOA8 from Botryotinia fuckeliana (strain B05.10) (Noble rot fungus).